The chain runs to 349 residues: Homeobox-leucine zipper protein HOX7 (349 aa).

The tract at residues R42–R186 is disordered. 2 stretches are compositionally biased toward polar residues: residues S89–M99 and S121–V135. A DNA-binding region (homeobox) is located at residues G150–Q209. Residues D167–L183 show a composition bias toward basic and acidic residues. Positions K208–L252 are leucine-zipper.

It belongs to the HD-ZIP homeobox family. Class II subfamily. In terms of assembly, homodimer. May form a heterodimer with HOX1, HOX2 or HOX3. As to expression, expressed in seedlings, roots, leaves, nodes, internodes, flowers and embryo.

It is found in the nucleus. In terms of biological role, probable transcription factor that binds to the DNA sequence 5'-CAAT[GC]ATTG-3'. This is Homeobox-leucine zipper protein HOX7 (HOX7) from Oryza sativa subsp. indica (Rice).